A 347-amino-acid polypeptide reads, in one-letter code: MAAILNVQRIQNNQVTEYTMSPVRNFANTKDVYFDAQLTNIESKIDSSRAQIHLTIALKYNTNLPDNIFQAHFSLGNWQSDKIQLQKAPDKKHDSLNSIKYFYAFLDVPRSALAKKEINRFSNVVARVLRISFRLQDQSEKGNWSDYHLFDTVASELYATVIKETINFGNMIKINALDGSKQLTSSQGSFKYSWTMYDYRNLEQLDEVRNLINISFDKPVQIVNVDVKIHYVPTKGRLQEIKQQGEFENNLDVNEKLKLNLIGNWNFDKHNKKLISDISGTGIFLPQGGYGSYEIMIGATVGNDFYTIIANNQFKYETPLDDLEQNDFFEVNYLPVYSTYNFSDLTQ.

This is an uncharacterized protein from Mycoplasma genitalium (strain ATCC 33530 / DSM 19775 / NCTC 10195 / G37) (Mycoplasmoides genitalium).